The chain runs to 351 residues: Peptide chain release factor 1 (351 aa).

Q233 carries the post-translational modification N5-methylglutamine.

The protein belongs to the prokaryotic/mitochondrial release factor family. In terms of processing, methylated by PrmC. Methylation increases the termination efficiency of RF1.

The protein resides in the cytoplasm. Its function is as follows. Peptide chain release factor 1 directs the termination of translation in response to the peptide chain termination codons UAG and UAA. The protein is Peptide chain release factor 1 of Treponema pallidum subsp. pallidum (strain SS14).